The sequence spans 178 residues: Photosystem I assembly protein Ycf4 (178 aa).

2 consecutive transmembrane segments (helical) span residues 19–39 (ILVAAMVTIGGVGFLFASLSS) and 61–81 (LVMGLYSIAAALLATYLWAVI).

The protein belongs to the Ycf4 family.

It localises to the cellular thylakoid membrane. Its function is as follows. Seems to be required for the assembly of the photosystem I complex. The chain is Photosystem I assembly protein Ycf4 from Synechococcus sp. (strain WH7803).